The chain runs to 96 residues: Protein ORF5 (96 aa).

It belongs to the microviridae C protein family.

Plays a central role in the packaging of viral DNA into phage procapsid, which occurs in the late stage of infection. Can interact with the replicative complex after the completion of one round of DNA synthesis. When protein ORF5 is bound to the replicative form, the complex becomes accessible to procapsid and serves as a DNA packaging apparatus. The polypeptide is Protein ORF5 (Chlamydia phage 1 (Bacteriophage Chp1)).